Here is a 301-residue protein sequence, read N- to C-terminus: MKVGVIMGGISSEREISIQSGNSVVHALDKDKYEAIPIVLNEKEDLIEKVKGIDFALLALHGKFGEDGTVQSVLKTLGIPFSGCGPLSSAICMDKDMTKRILAFGNVRTARWVMVSSVDEIDYEKIENLGYPVFIKPNNGGSSVATTLVESKEAVKDAVLEALKYDTEVMIEEYIKGDEITCPIIDGKMLPVLAIKPKGKFFDIASKYEDGGADEFIVKLNEDLHKEVEKMALETYKLLKCDVYARVDMLVRDNVPYVLEVNTLPGMTKNSLFPKSAAGINMSFEELLDTIIEKSLKVNRE.

The 195-residue stretch at 99–293 (KRILAFGNVR…FEELLDTIIE (195 aa)) folds into the ATP-grasp domain. 126 to 181 (IENLGYPVFIKPNNGGSSVATTLVESKEAVKDAVLEALKYDTEVMIEEYIKGDEIT) serves as a coordination point for ATP. Residues Asp248, Glu260, and Asn262 each contribute to the Mg(2+) site.

The protein belongs to the D-alanine--D-alanine ligase family. It depends on Mg(2+) as a cofactor. Mn(2+) serves as cofactor.

The protein localises to the cytoplasm. The enzyme catalyses 2 D-alanine + ATP = D-alanyl-D-alanine + ADP + phosphate + H(+). It functions in the pathway cell wall biogenesis; peptidoglycan biosynthesis. Its function is as follows. Cell wall formation. This chain is D-alanine--D-alanine ligase, found in Clostridium perfringens (strain SM101 / Type A).